The following is a 393-amino-acid chain: SET domain-containing protein DDB_G0283443 (393 aa).

The region spanning 17 to 312 is the SET domain; the sequence is KKIEINETLE…KGDELSISYI (296 aa).

Belongs to the class V-like SAM-binding methyltransferase superfamily.

Functionally, probable methyltransferase. The protein is SET domain-containing protein DDB_G0283443 of Dictyostelium discoideum (Social amoeba).